Here is a 375-residue protein sequence, read N- to C-terminus: Chaperone protein DnaJ (375 aa).

The J domain occupies 5–68 (DYYEILGVSK…KKRAQYDQFG (64 aa)). Residues 135-217 (GISKNINYDR…CYGKKVINER (83 aa)) form a CR-type zinc finger. The Zn(2+) site is built by cysteine 148, cysteine 151, cysteine 165, cysteine 168, cysteine 191, cysteine 194, cysteine 205, and cysteine 208. CXXCXGXG motif repeat units lie at residues 148-155 (CHKCQGTG), 165-172 (CTKCHGRG), 191-198 (CHECEGTG), and 205-212 (CEQCYGKK).

This sequence belongs to the DnaJ family. As to quaternary structure, homodimer. Zn(2+) is required as a cofactor.

Its subcellular location is the cytoplasm. In terms of biological role, participates actively in the response to hyperosmotic and heat shock by preventing the aggregation of stress-denatured proteins and by disaggregating proteins, also in an autonomous, DnaK-independent fashion. Unfolded proteins bind initially to DnaJ; upon interaction with the DnaJ-bound protein, DnaK hydrolyzes its bound ATP, resulting in the formation of a stable complex. GrpE releases ADP from DnaK; ATP binding to DnaK triggers the release of the substrate protein, thus completing the reaction cycle. Several rounds of ATP-dependent interactions between DnaJ, DnaK and GrpE are required for fully efficient folding. Also involved, together with DnaK and GrpE, in the DNA replication of plasmids through activation of initiation proteins. This chain is Chaperone protein DnaJ, found in Ureaplasma parvum serovar 3 (strain ATCC 700970).